A 414-amino-acid chain; its full sequence is Multifunctional CCA protein (414 aa).

The ATP site is built by Gly8 and Arg11. 2 residues coordinate CTP: Gly8 and Arg11. Mg(2+) is bound by residues Asp21 and Asp23. ATP contacts are provided by Arg91, Arg137, and Arg140. Residues Arg91, Arg137, and Arg140 each coordinate CTP. Residues 226–327 enclose the HD domain; sequence TGVHVMMVVD…VTLFERCDAF (102 aa).

This sequence belongs to the tRNA nucleotidyltransferase/poly(A) polymerase family. Bacterial CCA-adding enzyme type 1 subfamily. In terms of assembly, monomer. Can also form homodimers and oligomers. It depends on Mg(2+) as a cofactor. The cofactor is Ni(2+).

It carries out the reaction a tRNA precursor + 2 CTP + ATP = a tRNA with a 3' CCA end + 3 diphosphate. The enzyme catalyses a tRNA with a 3' CCA end + 2 CTP + ATP = a tRNA with a 3' CCACCA end + 3 diphosphate. Functionally, catalyzes the addition and repair of the essential 3'-terminal CCA sequence in tRNAs without using a nucleic acid template. Adds these three nucleotides in the order of C, C, and A to the tRNA nucleotide-73, using CTP and ATP as substrates and producing inorganic pyrophosphate. tRNA 3'-terminal CCA addition is required both for tRNA processing and repair. Also involved in tRNA surveillance by mediating tandem CCA addition to generate a CCACCA at the 3' terminus of unstable tRNAs. While stable tRNAs receive only 3'-terminal CCA, unstable tRNAs are marked with CCACCA and rapidly degraded. The protein is Multifunctional CCA protein of Herminiimonas arsenicoxydans.